The following is a 213-amino-acid chain: Cytidylate kinase (213 aa).

7–15 (GPAASGKGT) lines the ATP pocket.

It belongs to the cytidylate kinase family. Type 1 subfamily.

It is found in the cytoplasm. It carries out the reaction CMP + ATP = CDP + ADP. It catalyses the reaction dCMP + ATP = dCDP + ADP. The chain is Cytidylate kinase from Rhodospirillum rubrum (strain ATCC 11170 / ATH 1.1.1 / DSM 467 / LMG 4362 / NCIMB 8255 / S1).